Reading from the N-terminus, the 257-residue chain is NAD-capped RNA hydrolase NudC (257 aa).

The substrate site is built by K25 and R69. C98 and C101 together coordinate Zn(2+). Residue E111 coordinates substrate. Residues C116 and C119 each coordinate Zn(2+). Position 124 (Y124) interacts with substrate. The Nudix hydrolase domain maps to P125–T248. Residues A158, E174, and E178 each contribute to the a divalent metal cation site. The Nudix box motif lies at G159–G180. Q192–S199 contributes to the substrate binding site. A divalent metal cation is bound at residue E219. A241 contributes to the substrate binding site.

It belongs to the Nudix hydrolase family. NudC subfamily. In terms of assembly, homodimer. Mg(2+) is required as a cofactor. Mn(2+) serves as cofactor. Requires Zn(2+) as cofactor.

The enzyme catalyses a 5'-end NAD(+)-phospho-ribonucleoside in mRNA + H2O = a 5'-end phospho-adenosine-phospho-ribonucleoside in mRNA + beta-nicotinamide D-ribonucleotide + 2 H(+). The catalysed reaction is NAD(+) + H2O = beta-nicotinamide D-ribonucleotide + AMP + 2 H(+). It catalyses the reaction NADH + H2O = reduced beta-nicotinamide D-ribonucleotide + AMP + 2 H(+). Its function is as follows. mRNA decapping enzyme that specifically removes the nicotinamide adenine dinucleotide (NAD) cap from a subset of mRNAs by hydrolyzing the diphosphate linkage to produce nicotinamide mononucleotide (NMN) and 5' monophosphate mRNA. The NAD-cap is present at the 5'-end of some mRNAs and stabilizes RNA against 5'-processing. Has preference for mRNAs with a 5'-end purine. Catalyzes the hydrolysis of a broad range of dinucleotide pyrophosphates. The sequence is that of NAD-capped RNA hydrolase NudC from Escherichia coli (strain 55989 / EAEC).